A 103-amino-acid chain; its full sequence is Small ribosomal subunit protein uS14c (103 aa).

A disordered region spans residues 27 to 56 (SKKKIRSKVSPLSLSEKTKMQEKLQSLPRN).

The protein belongs to the universal ribosomal protein uS14 family. In terms of assembly, part of the 30S ribosomal subunit.

The protein resides in the plastid. It is found in the chloroplast. Functionally, binds 16S rRNA, required for the assembly of 30S particles. This is Small ribosomal subunit protein uS14c from Zea mays (Maize).